The primary structure comprises 507 residues: WD repeat-containing protein fzy-1 (507 aa).

Disordered stretches follow at residues 1–39 (MNNK…NTNL) and 74–95 (NKEN…SVEG). 2 stretches are compositionally biased toward polar residues: residues 15-24 (VRSSAQQNGL) and 74-86 (NKEN…SEPN). WD repeat units lie at residues 219 to 258 (TNEG…TTEY), 313 to 352 (GHCR…GSTV), 364 to 406 (EHTG…QKVR), and 411 to 450 (CETG…KLSH).

It belongs to the WD repeat CDC20/Fizzy family.

The protein resides in the chromosome. Its subcellular location is the cytoplasm. Its function is as follows. Plays a role in metaphase-anaphase transition during meiosis I. Required for embryonic anterior-posterior axis formation. The sequence is that of WD repeat-containing protein fzy-1 from Caenorhabditis elegans.